A 211-amino-acid chain; its full sequence is Glycerol-3-phosphate acyltransferase (211 aa).

The next 6 helical transmembrane spans lie at F10–L30, T63–L83, S90–L110, L126–L146, L152–L172, and A174–A194.

The protein belongs to the PlsY family. As to quaternary structure, probably interacts with PlsX.

Its subcellular location is the cell inner membrane. It carries out the reaction an acyl phosphate + sn-glycerol 3-phosphate = a 1-acyl-sn-glycero-3-phosphate + phosphate. It participates in lipid metabolism; phospholipid metabolism. In terms of biological role, catalyzes the transfer of an acyl group from acyl-phosphate (acyl-PO(4)) to glycerol-3-phosphate (G3P) to form lysophosphatidic acid (LPA). This enzyme utilizes acyl-phosphate as fatty acyl donor, but not acyl-CoA or acyl-ACP. The polypeptide is Glycerol-3-phosphate acyltransferase (Bartonella quintana (strain Toulouse) (Rochalimaea quintana)).